A 176-amino-acid chain; its full sequence is MDLPGPIHDFLLVFLGSGLLVGGLGVVLLPNPIFSAFSLGFVLVCISLLYILSNSHFVAAAQLLIYVGAINVLIIFAVMFMNDSEYSTDFNLWTVGNGITSLVCTTILFLLMSTILDTSWYGVIWTTKLNQILEQDLISNSQQIGIHLSTDFFLPFELISIILLVALIGAISVARQ.

A run of 5 helical transmembrane segments spans residues Phe-10–Pro-30, Pro-32–Leu-52, Ala-61–Met-81, Leu-92–Met-112, and Phe-152–Ser-172.

The protein belongs to the complex I subunit 6 family. As to quaternary structure, NDH is composed of at least 16 different subunits, 5 of which are encoded in the nucleus.

The protein resides in the plastid. It is found in the chloroplast thylakoid membrane. The catalysed reaction is a plastoquinone + NADH + (n+1) H(+)(in) = a plastoquinol + NAD(+) + n H(+)(out). It carries out the reaction a plastoquinone + NADPH + (n+1) H(+)(in) = a plastoquinol + NADP(+) + n H(+)(out). Functionally, NDH shuttles electrons from NAD(P)H:plastoquinone, via FMN and iron-sulfur (Fe-S) centers, to quinones in the photosynthetic chain and possibly in a chloroplast respiratory chain. The immediate electron acceptor for the enzyme in this species is believed to be plastoquinone. Couples the redox reaction to proton translocation, and thus conserves the redox energy in a proton gradient. This Capsella bursa-pastoris (Shepherd's purse) protein is NAD(P)H-quinone oxidoreductase subunit 6, chloroplastic (ndhG).